A 550-amino-acid polypeptide reads, in one-letter code: Formate--tetrahydrofolate ligase (550 aa).

Thr-62–Ser-69 is a binding site for ATP.

Belongs to the formate--tetrahydrofolate ligase family.

It catalyses the reaction (6S)-5,6,7,8-tetrahydrofolate + formate + ATP = (6R)-10-formyltetrahydrofolate + ADP + phosphate. The protein operates within one-carbon metabolism; tetrahydrofolate interconversion. The chain is Formate--tetrahydrofolate ligase from Corynebacterium diphtheriae (strain ATCC 700971 / NCTC 13129 / Biotype gravis).